A 391-amino-acid chain; its full sequence is Nuclear hormone receptor family member nhr-218 (391 aa).

Positions 17 to 93 (PIPCQICTYQ…MGMKAEKIQQ (77 aa)) form a DNA-binding region, nuclear receptor. 2 consecutive NR C4-type zinc fingers follow at residues 20–40 (CQIC…CRAC) and 56–76 (CKTR…CRLC). The NR LBD domain maps to 146-391 (SRNYSDSPLT…DNFCNLFAMK (246 aa)).

Belongs to the nuclear hormone receptor family.

The protein localises to the nucleus. In terms of biological role, orphan nuclear receptor. In Caenorhabditis elegans, this protein is Nuclear hormone receptor family member nhr-218 (nhr-218).